Here is a 157-residue protein sequence, read N- to C-terminus: Transcription elongation factor GreA (157 aa).

The protein belongs to the GreA/GreB family.

Necessary for efficient RNA polymerase transcription elongation past template-encoded arresting sites. The arresting sites in DNA have the property of trapping a certain fraction of elongating RNA polymerases that pass through, resulting in locked ternary complexes. Cleavage of the nascent transcript by cleavage factors such as GreA or GreB allows the resumption of elongation from the new 3'terminus. GreA releases sequences of 2 to 3 nucleotides. In Mesorhizobium japonicum (strain LMG 29417 / CECT 9101 / MAFF 303099) (Mesorhizobium loti (strain MAFF 303099)), this protein is Transcription elongation factor GreA.